Here is a 119-residue protein sequence, read N- to C-terminus: Large ribosomal subunit protein bL20 (119 aa).

This sequence belongs to the bacterial ribosomal protein bL20 family.

Functionally, binds directly to 23S ribosomal RNA and is necessary for the in vitro assembly process of the 50S ribosomal subunit. It is not involved in the protein synthesizing functions of that subunit. This is Large ribosomal subunit protein bL20 from Levilactobacillus brevis (strain ATCC 367 / BCRC 12310 / CIP 105137 / JCM 1170 / LMG 11437 / NCIMB 947 / NCTC 947) (Lactobacillus brevis).